Consider the following 418-residue polypeptide: MLSRDMNIADFDPELSQAIAQETQRQEDHIELIASENYCSPRVLEAQGSQLTNKYAEGYPHKRYYGGCEYVDIAEDLAIERANQLFGSDYANVQPHSGSQANSAVFMALLDAGDTVLGMSLAHGGHLTHGAHVSFSGKTYNAVQYGIDEQTGKIDYDVVEALAVEHKPKMIIGGFSAYSGIVDWQRFREIADKVGAYLLVDMAHVAGLVAAGLYPNPLPHAHVVTTTTHKTLAGPRGGLILSACGDEAIYKKLNSSVFPGNQGGPLCHVIAAKAVAFKEALQPDFKAYQQQVLLNAKAMVSVMQERGYDIVSGGTDNHLFLLDLISKDITGKDADAALGRANITVNKNSVPNDPRSPFVTSGLRIGSPAITRRGFKEEQAKQVATWICDVIDNIEDEAVIERVKGEVLTLCGKFPVYA.

(6S)-5,6,7,8-tetrahydrofolate is bound by residues leucine 121 and 125–127 (GHL). Lysine 230 is modified (N6-(pyridoxal phosphate)lysine). Residue 356-358 (SPF) coordinates (6S)-5,6,7,8-tetrahydrofolate.

The protein belongs to the SHMT family. Homodimer. Pyridoxal 5'-phosphate serves as cofactor.

It localises to the cytoplasm. The catalysed reaction is (6R)-5,10-methylene-5,6,7,8-tetrahydrofolate + glycine + H2O = (6S)-5,6,7,8-tetrahydrofolate + L-serine. It functions in the pathway one-carbon metabolism; tetrahydrofolate interconversion. It participates in amino-acid biosynthesis; glycine biosynthesis; glycine from L-serine: step 1/1. In terms of biological role, catalyzes the reversible interconversion of serine and glycine with tetrahydrofolate (THF) serving as the one-carbon carrier. This reaction serves as the major source of one-carbon groups required for the biosynthesis of purines, thymidylate, methionine, and other important biomolecules. Also exhibits THF-independent aldolase activity toward beta-hydroxyamino acids, producing glycine and aldehydes, via a retro-aldol mechanism. The polypeptide is Serine hydroxymethyltransferase (Pseudoalteromonas atlantica (strain T6c / ATCC BAA-1087)).